A 212-amino-acid polypeptide reads, in one-letter code: MNLLIMGLPGAGKGTQAAKIVEQFHVAHISTGDMFRAAMVNQTEMGVLAKSYIDKGELVPDEVTNGIVKERLSQDDIKETGFLLDGYPRTIEQAHALDKTLAELGIELEGVINIEVNPDSLLERLSGRIIHRVTGETFHKVFNPPVDYKEEDYYQREDDKPETVKRRLDVNIAQGEPIIAHYRAKGLVHDIEGNQDINDVFSDIEKVLTNLK.

ATP is bound at residue 10–15 (GAGKGT). The NMP stretch occupies residues 30-59 (STGDMFRAAMVNQTEMGVLAKSYIDKGELV). AMP contacts are provided by residues T31, R36, 57-59 (ELV), 86-89 (GYPR), and Q93. An LID region spans residues 127 to 159 (GRIIHRVTGETFHKVFNPPVDYKEEDYYQREDD). Residues R128 and 137-138 (TF) each bind ATP. R156 and R167 together coordinate AMP. An ATP-binding site is contributed by Q195.

Belongs to the adenylate kinase family. As to quaternary structure, monomer.

The protein resides in the cytoplasm. It catalyses the reaction AMP + ATP = 2 ADP. It participates in purine metabolism; AMP biosynthesis via salvage pathway; AMP from ADP: step 1/1. In terms of biological role, catalyzes the reversible transfer of the terminal phosphate group between ATP and AMP. Plays an important role in cellular energy homeostasis and in adenine nucleotide metabolism. The sequence is that of Adenylate kinase from Streptococcus pneumoniae (strain 70585).